We begin with the raw amino-acid sequence, 341 residues long: tRNA (guanine-N(7)-)-methyltransferase (341 aa).

S-adenosyl-L-methionine is bound by residues Glu75, Glu100, Asp127, and Asp150. Asp150 is an active-site residue. Lys154 contacts substrate. The interaction with RNA stretch occupies residues 156-161 (RHNKRR). Position 186 (Asp186) interacts with substrate.

It belongs to the class I-like SAM-binding methyltransferase superfamily. TrmB family.

It catalyses the reaction guanosine(46) in tRNA + S-adenosyl-L-methionine = N(7)-methylguanosine(46) in tRNA + S-adenosyl-L-homocysteine. It functions in the pathway tRNA modification; N(7)-methylguanine-tRNA biosynthesis. Its function is as follows. Catalyzes the formation of N(7)-methylguanine at position 46 (m7G46) in tRNA. The protein is tRNA (guanine-N(7)-)-methyltransferase of Xanthomonas euvesicatoria pv. vesicatoria (strain 85-10) (Xanthomonas campestris pv. vesicatoria).